A 608-amino-acid chain; its full sequence is Albumin (608 aa).

Positions 1–18 are cleaved as a signal peptide; it reads MKWVTFISLFFLFSSAYS. Residues 19–24 constitute a propeptide that is removed on maturation; that stretch reads RGLVRR. Albumin domains follow at residues 19–210, 211–403, and 404–601; these read RGLV…EALR, EKVL…EFKP, and LVDE…KLVA. Phosphoserine is present on serine 29. Residues glutamate 30 and aspartate 37 each coordinate Ca(2+). The cysteines at positions 77 and 86 are disulfide-linked. Phosphoserine is present on residues serine 82 and serine 89. Residue histidine 91 participates in Zn(2+) binding. Disulfide bonds link cysteine 99-cysteine 115, cysteine 114-cysteine 125, cysteine 148-cysteine 193, cysteine 192-cysteine 201, cysteine 224-cysteine 270, and cysteine 269-cysteine 277. At lysine 229 the chain carries N6-succinyllysine. Glutamate 268 is a binding site for Ca(2+). Zn(2+)-binding residues include histidine 271 and aspartate 273. The Ca(2+) site is built by aspartate 273, glutamate 276, aspartate 279, and aspartate 283. Disulfide bonds link cysteine 289/cysteine 303, cysteine 302/cysteine 313, cysteine 340/cysteine 385, cysteine 384/cysteine 393, cysteine 416/cysteine 462, cysteine 461/cysteine 472, cysteine 485/cysteine 501, and cysteine 500/cysteine 511. The residue at position 443 (serine 443) is a Phosphoserine. Residues threonine 444 and threonine 446 each carry the phosphothreonine modification. Residue lysine 460 is modified to N6-succinyllysine. Serine 513 is subject to Phosphoserine. 2 cysteine pairs are disulfide-bonded: cysteine 538–cysteine 583 and cysteine 582–cysteine 591. Lysine 558 carries the post-translational modification N6-methyllysine. Threonine 570 carries the post-translational modification Phosphothreonine. Position 588 is an N6-succinyllysine (lysine 588).

This sequence belongs to the ALB/AFP/VDB family. Interacts with FCGRT; this interaction regulates ALB homeostasis. Interacts with TASOR. In plasma, occurs in a covalently-linked complex with chromophore-bound alpha-1-microglobulin; this interaction does not prevent fatty acid binding to ALB. Phosphorylated by FAM20C in the extracellular medium. In terms of tissue distribution, plasma.

It is found in the secreted. Its function is as follows. Binds water, Ca(2+), Na(+), K(+), fatty acids, hormones, bilirubin and drugs. Its main function is the regulation of the colloidal osmotic pressure of blood. Major zinc transporter in plasma, typically binds about 80% of all plasma zinc. Major calcium and magnesium transporter in plasma, binds approximately 45% of circulating calcium and magnesium in plasma. Potentially has more than two calcium-binding sites and might additionally bind calcium in a non-specific manner. The shared binding site between zinc and calcium at residue Asp-273 suggests a crosstalk between zinc and calcium transport in the blood. The rank order of affinity is zinc &gt; calcium &gt; magnesium. Binds to the bacterial siderophore enterobactin and inhibits enterobactin-mediated iron uptake of E.coli from ferric transferrin, and may thereby limit the utilization of iron and growth of enteric bacteria such as E.coli. Does not prevent iron uptake by the bacterial siderophore aerobactin. The chain is Albumin (ALB) from Canis lupus familiaris (Dog).